We begin with the raw amino-acid sequence, 787 residues long: Glutamine-dependent NAD(+) synthetase (787 aa).

Residues 5-275 form the CN hydrolase domain; that stretch reads VTVAVSTLNQ…VEVTLATIDL (271 aa). Glu-45 (proton acceptor; for glutaminase activity) is an active-site residue. The active-site For glutaminase activity is the Lys-114. Cys-175 functions as the Nucleophile; for glutaminase activity in the catalytic mechanism. The ligase stretch occupies residues 325–787; sequence MHTPEEEIAL…KIKDRTGIPV (463 aa). 355-362 is an ATP binding site; that stretch reads PLSGGVDS. The active site involves Ser-357. Phosphoserine is present on Ser-703.

In the C-terminal section; belongs to the NAD synthetase family.

The catalysed reaction is deamido-NAD(+) + L-glutamine + ATP + H2O = L-glutamate + AMP + diphosphate + NAD(+) + H(+). The protein operates within cofactor biosynthesis; NAD(+) biosynthesis; NAD(+) from deamido-NAD(+) (L-Gln route): step 1/1. Catalyzes the ATP-dependent amidation of deamido-NAD to form NAD. Uses L-glutamine as a nitrogen source. Because of its role in energy metabolism, involved in the modulation of aged-related cardiac function, mobility, and lifespan. The sequence is that of Glutamine-dependent NAD(+) synthetase from Drosophila melanogaster (Fruit fly).